Consider the following 270-residue polypeptide: Formamidopyrimidine-DNA glycosylase (270 aa).

Pro2 acts as the Schiff-base intermediate with DNA in catalysis. The active-site Proton donor is the Glu3. Catalysis depends on Lys59, which acts as the Proton donor; for beta-elimination activity. DNA contacts are provided by His91, Arg110, and Lys151. Residues 236-270 form an FPG-type zinc finger; that stretch reads RVYGRDKEPCVTCGQQVKSKVLGGRNTFWCSRCQK. The Proton donor; for delta-elimination activity role is filled by Arg260.

Belongs to the FPG family. Monomer. Zn(2+) is required as a cofactor.

The catalysed reaction is Hydrolysis of DNA containing ring-opened 7-methylguanine residues, releasing 2,6-diamino-4-hydroxy-5-(N-methyl)formamidopyrimidine.. The enzyme catalyses 2'-deoxyribonucleotide-(2'-deoxyribose 5'-phosphate)-2'-deoxyribonucleotide-DNA = a 3'-end 2'-deoxyribonucleotide-(2,3-dehydro-2,3-deoxyribose 5'-phosphate)-DNA + a 5'-end 5'-phospho-2'-deoxyribonucleoside-DNA + H(+). Functionally, involved in base excision repair of DNA damaged by oxidation or by mutagenic agents. Acts as a DNA glycosylase that recognizes and removes damaged bases. Has a preference for oxidized purines, such as 7,8-dihydro-8-oxoguanine (8-oxoG). Has AP (apurinic/apyrimidinic) lyase activity and introduces nicks in the DNA strand. Cleaves the DNA backbone by beta-delta elimination to generate a single-strand break at the site of the removed base with both 3'- and 5'-phosphates. The polypeptide is Formamidopyrimidine-DNA glycosylase (Bdellovibrio bacteriovorus (strain ATCC 15356 / DSM 50701 / NCIMB 9529 / HD100)).